We begin with the raw amino-acid sequence, 778 residues long: High affinity nerve growth factor receptor (778 aa).

The N-terminal stretch at 1–14 (WGCLRLPLPLCHAL) is a signal peptide. Residues 15–400 (AAHCRCPASH…VETADEHTFG (386 aa)) are Extracellular-facing. A disulfide bridge links Cys-18 with Cys-20. 2 LRR repeats span residues 71–92 (DLRH…AFQD) and 95–116 (RLSH…TFQH). N-linked (GlcNAc...) asparagine glycosylation is found at Asn-100, Asn-130, Asn-143, Asn-151, Asn-194, Asn-234, Asn-262, Asn-300, Asn-320, Asn-340, and Asn-384. The LRRCT domain maps to 127-175 (NPFNCSCGIRWLQLWQNGSRAELGNQSLLCWEGSMLVALDSHPLHDCEP). Cys-133 and Cys-173 form a disulfide bridge. Ig-like C2-type domains are found at residues 175-262 (PPTA…VMLN) and 281-347 (WCIP…VVQN). Residues Cys-282 and Cys-327 are joined by a disulfide bond. A helical transmembrane segment spans residues 401 to 421 (VSVAVALAVFASLFLSVMLIA). Over 422 to 778 (LNKCGHRSKF…TPPIYLDILG (357 aa)) the chain is Cytoplasmic. Tyr-479 is subject to Phosphotyrosine; by autocatalysis. Positions 493–763 (IVLKWELGEG…RSIQDIHSRL (271 aa)) constitute a Protein kinase domain. Residues 499–507 (LGEGAFGKV) and Lys-527 contribute to the ATP site. Residue Asp-633 is the Proton acceptor of the active site. Tyr-659, Tyr-663, Tyr-664, and Tyr-773 each carry phosphotyrosine; by autocatalysis.

It belongs to the protein kinase superfamily. Tyr protein kinase family. Insulin receptor subfamily. As to quaternary structure, exists in a dynamic equilibrium between monomeric (low affinity) and dimeric (high affinity) structures. Homodimerization is induced by NGF dimer binding. Interacts with PTPRS. In terms of processing, ligand-mediated auto-phosphorylation. Ubiquitinated. Undergoes polyubiquitination upon activation; regulated by NGFR. Ubiquitination regulates the internalization of the receptor.

Its subcellular location is the cell membrane. The protein resides in the early endosome membrane. The protein localises to the late endosome membrane. It localises to the recycling endosome membrane. The enzyme catalyses L-tyrosyl-[protein] + ATP = O-phospho-L-tyrosyl-[protein] + ADP + H(+). With respect to regulation, the pro-survival signaling effect of NTRK1 in neurons requires its endocytosis into signaling early endosomes and its retrograde axonal transport. In terms of biological role, receptor tyrosine kinase involved in the development and the maturation of the central and peripheral nervous systems through regulation of proliferation, differentiation and survival of sympathetic and nervous neurons. High affinity receptor for NGF which is its primary ligand, it can also bind and be activated by NTF3/neurotrophin-3. Upon dimeric NGF ligand-binding, undergoes homodimerization, autophosphorylation and activation. Recruits, phosphorylates and/or activates several downstream effectors that regulate distinct overlapping signaling cascades driving cell survival and differentiation. In absence of ligand and activation, may promote cell death, making the survival of neurons dependent on trophic factors. This is High affinity nerve growth factor receptor (NTRK1) from Gallus gallus (Chicken).